A 959-amino-acid chain; its full sequence is Nucleoporin NUP100/NSP100 (959 aa).

The tract at residues 1–104 (MFGNNRPMFG…NSSNASNGNT (104 aa)) is disordered. FG repeat units follow at residues 2–3 (FG), 9–10 (FG), and Gly-17. A compositionally biased stretch (polar residues) spans 12–36 (SNLSFGSNTSSFGGQQSQQPNSLFG). An SLFG 1; approximate repeat occupies 21–24 (SSFG). Residues 33 to 36 (SLFG) form an SLFG 2 repeat. Residues 37–48 (NSNNNNNSTSNN) show a composition bias toward low complexity. Residues 51 to 54 (SGFG) form an SLFG 3; approximate repeat. 2 stretches are compositionally biased toward low complexity: residues 56–81 (FTSAAGSNSNSLFGNNNTQNNGAFGQ) and 92–104 (GSLNSSNASNGNT). The stretch at 66–69 (SLFG) is one SLFG 4 repeat. The GLFG 1; approximate repeat unit spans residues 77-80 (GAFG). One copy of the SLFG 5; approximate repeat lies at 89–92 (SPFG). Residues 105 to 106 (FG) form an FG 4 repeat. Residues 112 to 115 (GSFG) form a GLFG 2; approximate repeat. Residues 121–136 (AFNNNSNSTNSPFGFN) show a composition bias toward low complexity. Residues 121-172 (AFNNNSNSTNSPFGFNKPNTGGTLFGSQNNNSAGTSSLFGGQSTSTTGTFGN) form a disordered region. The stretch at 131 to 134 (SPFG) is one SLFG 6; approximate repeat. Residues 137 to 153 (KPNTGGTLFGSQNNNSA) show a composition bias toward polar residues. The stretch at 145-146 (FG) is one FG 5 repeat. The segment covering 154–172 (GTSSLFGGQSTSTTGTFGN) has biased composition (low complexity). An SLFG 7 repeat occupies 157-160 (SLFG). The GLFG 3; approximate repeat unit spans residues 168 to 171 (GTFG). The SLFG 8; approximate repeat unit spans residues 175 to 178 (SSFG). An FG 6 repeat occupies 189–190 (FG). Positions 190 to 394 (GAGNNSQSNT…NNQQQQSTGL (205 aa)) are disordered. Over residues 192-245 (GNNSQSNTTGSLFGNQQSSAFGTNNQQGSLFGQQSQNTNNAFGNQNQLGGSSFG) the composition is skewed to polar residues. The SLFG 9 repeat unit spans residues 202 to 205 (SLFG). An SLFG 10; approximate repeat occupies 210-213 (SAFG). The SLFG 11 repeat unit spans residues 220 to 223 (SLFG). One copy of the FG 7 repeat lies at 233–234 (FG). One copy of the SLFG 12; approximate repeat lies at 242–245 (SSFG). Residues 253 to 256 (SLFG) form an SLFG 13 repeat. Residues 259 to 293 (NNTLGNTTNNRNGLFGQMNSSNQGSSNSGLFGQNS) are compositionally biased toward low complexity. GLFG repeat units lie at residues 271-274 (GLFG) and 287-290 (GLFG). The span at 294-303 (MNSSTQGVFG) shows a compositional bias: polar residues. The stretch at 300–303 (GVFG) is one GLFG 6; approximate repeat. Low complexity predominate over residues 304 to 317 (QNNNQMQINGNNNN). The stretch at 318-321 (SLFG) is one SLFG 14 repeat. GLFG repeat units follow at residues 333–336 (GLFG), 345–348 (GLFG), 358–361 (GLFG), 379–382 (GLFG), and 393–396 (GLFG). The segment covering 336–352 (GQNNQQQGSGLFGQNSQ) has biased composition (low complexity). Over residues 353–377 (TSGSSGLFGQNNQKQPNTFTQSNTG) the composition is skewed to polar residues. SLFG repeat units follow at residues 405–408 (SLFG), 417–420 (SLFG), and 436–439 (SLFG). Residues 448–449 (FG) form an FG 8 repeat. An SLFG 18 repeat occupies 462–465 (SLFG). An SLFG 19; approximate repeat occupies 474–477 (SLFG). GLFG repeat units lie at residues 490-493 (GLFG), 506-509 (GLFG), and 523-526 (GLFG). The stretch at 542–543 (FG) is one FG 9 repeat. Residues 550 to 553 (GLFG) form a GLFG 15 repeat. The stretch at 569–570 (FG) is one FG 10 repeat. Disordered regions lie at residues 672–697 (TLERSDRGSSTSNSITDPESSYLNSN) and 745–794 (DDQA…PMIE). Residues 679-697 (GSSTSNSITDPESSYLNSN) show a composition bias toward polar residues. Over residues 757 to 775 (LTEKAHSPQTDLKDDHDES) the composition is skewed to basic and acidic residues. 2 positions are modified to phosphoserine: Ser-763 and Ser-783. Over residues 777 to 790 (PDPQSKSPNGSTSI) the composition is skewed to polar residues. The Peptidase S59 domain maps to 814–956 (KNNYYISPSI…GTYSYTIDHP (143 aa)). The tract at residues 816–955 (NYYISPSIET…TGTYSYTIDH (140 aa)) is nucleoporin RNA-binding motif (NRM).

This sequence belongs to the nucleoporin GLFG family. As to quaternary structure, component of the nuclear pore complex (NPC). NPC constitutes the exclusive means of nucleocytoplasmic transport. NPCs allow the passive diffusion of ions and small molecules and the active, nuclear transport receptor-mediated bidirectional transport of macromolecules such as proteins, RNAs, ribonucleoparticles (RNPs), and ribosomal subunits across the nuclear envelope. Due to its 8-fold rotational symmetry, all subunits are present with 8 copies or multiples thereof. Through its FG repeats NUP100 interacts with numerous karyopherins including KAP95, and MEX67.

The protein resides in the nucleus. It localises to the nuclear pore complex. The protein localises to the nucleus membrane. Functionally, functions as a component of the nuclear pore complex (NPC). NPC components, collectively referred to as nucleoporins (NUPs), can play the role of both NPC structural components and of docking or interaction partners for transiently associated nuclear transport factors. Active directional transport is assured by both, a Phe-Gly (FG) repeat affinity gradient for these transport factors across the NPC and a transport cofactor concentration gradient across the nuclear envelope (GSP1 and GSP2 GTPases associated predominantly with GTP in the nucleus, with GDP in the cytoplasm). NUP100 plays an important role in several nuclear export and import pathways including poly(A)+ RNA and protein transport. This Saccharomyces cerevisiae (strain ATCC 204508 / S288c) (Baker's yeast) protein is Nucleoporin NUP100/NSP100 (NUP100).